The following is a 534-amino-acid chain: Acetyltransferase MATC1 (534 aa).

Residues histidine 186 and aspartate 459 each act as proton acceptor in the active site.

Belongs to the plant acyltransferase family.

The protein localises to the cell membrane. It functions in the pathway secondary metabolite biosynthesis. In terms of biological role, acetyltransferase; part of the gene cluster that mediates the biosynthesis of mannosylerythritol lipids (MELs), surface-active substances that enhance the availability of water-insoluble substrates. Mannosylerythritol lipid production is responsible for hemolytic activity of Ustilago maydis. Depending on the number of acetyl groups, mannosylerythritol lipids can be differentiated into MEL A (fully acetylated), MEL B and MEL C (monoacetylated at R-6 and R-4, respectively), and the fully deacetylated MEL D. The first step in the pathway is the generation of mannosylerythritol by the glycosyltransferase EMT1 which catalyzes the transfer of GDP-mannose to the C-4 atom of meso-erythritol. This reaction has to be stereospecific, since only mannosyl-D-erythritol is generated. The produced disaccharide is subsequently acylated with fatty acids of various lengths derived from the peroxisomal beta-oxidation by the peroxisomal acyltransferases MAC1 and MAC2 at positions C-2 and C-3, repectively. The existence of MEL derivatives which carry an acetyl group at C-2 implies that at least MAC1 also accepts acetyl-CoA as a donor. The final step of MEL biosynthesis is the acetylation of the fully acylated mannosylerythritol lipids catalyzed by the acetyl-CoA-dependent acetyltransferase MAT1. MAT1 displays a relaxed regioselectivity and is able to transfer acetylgroups to both positions C-4 and C-6 of the mannosyl moiety. The protein is Acetyltransferase MATC1 of Mycosarcoma maydis (Corn smut fungus).